A 540-amino-acid polypeptide reads, in one-letter code: Beta-glucosidase 1B (540 aa).

The substrate site is built by Gln-25, His-128, and Asn-174. The Proton donor role is filled by Glu-175. Tyr-316 contributes to the substrate binding site. Residue Glu-380 is the Nucleophile of the active site. Substrate-binding positions include Trp-430 and 437-438 (EW). The segment covering 481-492 (PAAETKKAATPS) has biased composition (low complexity). Residues 481–524 (PAAETKKAATPSPLKPHGAISNGVSKKSSATKEPKSASRKKGRK) are disordered.

Belongs to the glycosyl hydrolase 1 family.

It carries out the reaction Hydrolysis of terminal, non-reducing beta-D-glucosyl residues with release of beta-D-glucose.. Its function is as follows. Plays an important role in cellulose degradation. Shows hydrolytic activity against several glycosidic compounds. The chain is Beta-glucosidase 1B from Phanerodontia chrysosporium (White-rot fungus).